The sequence spans 134 residues: Lymphocyte antigen 6A-2/6E-1 (134 aa).

An N-terminal signal peptide occupies residues 1–26; it reads MDTSHTTKSCLLILLVALLCAERAQG. The 93-residue stretch at 27-119 folds into the UPAR/Ly6 domain; it reads LECYQCYGVP…NGGSTWTMAG (93 aa). Cystine bridges form between Cys-29–Cys-53, Cys-32–Cys-41, Cys-46–Cys-74, Cys-78–Cys-98, and Cys-99–Cys-104. Gly-112 carries GPI-anchor amidated glycine lipidation. The propeptide at 113–134 is removed in mature form; that stretch reads STWTMAGVLLFSLSSVLLQTLL.

O-glycosylated. Not N-glycosylated. Post-translationally, not phosphorylated. As to expression, widely expressed.

Its subcellular location is the cell membrane. T-cell activation. The protein is Lymphocyte antigen 6A-2/6E-1 (Ly6a) of Mus musculus (Mouse).